The sequence spans 329 residues: VSG expression site-associated protein 221A (329 aa).

An N-terminal signal peptide occupies residues 1–23; that stretch reads MKVEIVELVVLLFSVTCVDAWLQ. N73, N294, and N308 each carry an N-linked (GlcNAc...) asparagine glycan.

In terms of biological role, not known but may be related to activation of the variant surface glycoprotein genes. In Trypanosoma brucei brucei, this protein is VSG expression site-associated protein 221A.